The sequence spans 434 residues: F-box only protein 15 (434 aa).

The 41-residue stretch at 1 to 41 (MPSEILLKIFSYLDAVSLLCAGCVSRRFYHLANDNFIWIRI) folds into the F-box domain.

As to quaternary structure, directly interacts with SKP1 and CUL1.

Its function is as follows. Substrate-recognition component of the SCF (SKP1-CUL1-F-box protein)-type E3 ubiquitin ligase complex. The polypeptide is F-box only protein 15 (FBXO15) (Macaca fascicularis (Crab-eating macaque)).